The chain runs to 55 residues: Large ribosomal subunit protein bL33 (55 aa).

Belongs to the bacterial ribosomal protein bL33 family.

The protein is Large ribosomal subunit protein bL33 of Buchnera aphidicola subsp. Schizaphis graminum (strain Sg).